The chain runs to 583 residues: Chloroplast sensor kinase, chloroplastic (583 aa).

Residues 1 to 50 constitute a chloroplast transit peptide; that stretch reads MSSIYLHGLSRRRRIGSVIVAIYMLDSCGAFLSASGSGRYPGFSYRGLSV. Positions 97-277 are GAF; the sequence is LFQELALSQL…SMDTERAALQ (181 aa). Residue Cys115 participates in [3Fe-4S] cluster binding. His292 carries the post-translational modification Phosphohistidine; by autocatalysis. Residues 412–442 form a disordered region; the sequence is AASGSNGPSNSTTSFSGNGSDVSTYTEDDGA. A compositionally biased stretch (low complexity) spans 414–431; it reads SGSNGPSNSTTSFSGNGS. The 137-residue stretch at 447 to 583 folds into the Histidine kinase domain; the sequence is SSLFSEMDLE…ALDWTLRKHW (137 aa).

It belongs to the chloroplast sensor kinase protein family. Oligomerizes. The cofactor is [3Fe-4S] cluster. Post-translationally, autophosphorylates, possibly on His-292.

The protein localises to the plastid. The protein resides in the chloroplast stroma. The enzyme catalyses ATP + protein L-histidine = ADP + protein N-phospho-L-histidine.. In terms of biological role, sensor kinase that senses the plastoquinone (PQ) redox state involved in stoichiometry adjustment of both photosystems (e.g. long-term adaptation via transcriptional regulation of reaction center genes of photosystems I and II) and state transitions (e.g. short-term adaptation involving reversible post-translational phosphorylation of light-harvesting complex II, LHC II), thus linking photosynthesis with gene expression in chloroplasts. Reduced PQ suppresses its autophosphorylation activity. The sequence is that of Chloroplast sensor kinase, chloroplastic from Phaeodactylum tricornutum (strain CCAP 1055/1).